A 287-amino-acid polypeptide reads, in one-letter code: 4-diphosphocytidyl-2-C-methyl-D-erythritol kinase (287 aa).

K14 is an active-site residue. 98–108 (PPGAGLGGGSS) lines the ATP pocket. D140 is a catalytic residue.

It belongs to the GHMP kinase family. IspE subfamily.

It carries out the reaction 4-CDP-2-C-methyl-D-erythritol + ATP = 4-CDP-2-C-methyl-D-erythritol 2-phosphate + ADP + H(+). Its pathway is isoprenoid biosynthesis; isopentenyl diphosphate biosynthesis via DXP pathway; isopentenyl diphosphate from 1-deoxy-D-xylulose 5-phosphate: step 3/6. Catalyzes the phosphorylation of the position 2 hydroxy group of 4-diphosphocytidyl-2C-methyl-D-erythritol. The polypeptide is 4-diphosphocytidyl-2-C-methyl-D-erythritol kinase (Methylacidiphilum infernorum (isolate V4) (Methylokorus infernorum (strain V4))).